The primary structure comprises 329 residues: Probable nicotianamine synthase 4 (329 aa).

It belongs to the nicotianamine synthase (NAS)-like family.

The catalysed reaction is 3 S-adenosyl-L-methionine = nicotianamine + 3 S-methyl-5'-thioadenosine + 3 H(+). Synthesizes nicotianamine, a polyamine that is the first intermediate in the synthesis of the phytosiderophores of the mugineic acid type found in gramineae which serves as a sensor for the physiological iron status within the plant, and/or might be involved in the transport of iron. The sequence is that of Probable nicotianamine synthase 4 (NAS4) from Hordeum vulgare (Barley).